The following is a 181-amino-acid chain: Lysozyme A (181 aa).

A signal peptide spans 1–19 (MRIAFFLLVLAVIIGFAYG). The propeptide occupies 139–181 (LTDSRPLGPFNVTESEMAQLFIDHEIAMAQCEAEKTCNGFDLE).

This sequence belongs to the dictyostelium lysozyme family. In terms of processing, contains six disulfide bonds.

It is found in the cytoplasmic vesicle lumen. The catalysed reaction is Hydrolysis of 1,4-beta-linkages between N-acetylmuramic acid and N-acetyl-D-glucosamine residues in a peptidoglycan.. Its function is as follows. Has antibacterial activity against the Gram-positive bacteria B.subtilis, B.megaterium and M.luteus. No antibacterial activity detected against the Gram-positive bacterium S.aureus or against the Gram-negative bacterium E.coli. Lacks chitinase activity. This Dictyostelium discoideum (Social amoeba) protein is Lysozyme A.